A 309-amino-acid chain; its full sequence is Glutaminase 2 (309 aa).

Substrate-binding residues include Ser-65, Asn-117, Glu-162, Asn-169, Tyr-193, Tyr-245, and Val-263.

The protein belongs to the glutaminase family. As to quaternary structure, homotetramer.

The enzyme catalyses L-glutamine + H2O = L-glutamate + NH4(+). This is Glutaminase 2 from Bacillus subtilis (strain 168).